The following is an 852-amino-acid chain: Bifunctional uridylyltransferase/uridylyl-removing enzyme (852 aa).

A uridylyltransferase region spans residues 1–318; that stretch reads MPANLSSALE…SAPMRVTLRI (318 aa). A uridylyl-removing region spans residues 319-672; that stretch reads DDDYIQVNNQ…SRILFKSDSF (354 aa). The HD domain maps to 436-558; the sequence is VDDHILTVVR…VQTHERLSAL (123 aa). ACT domains are found at residues 673-757 and 785-852; these read QVMV…SHSR and SVEI…EQLS.

It belongs to the GlnD family. Mg(2+) is required as a cofactor.

It catalyses the reaction [protein-PII]-L-tyrosine + UTP = [protein-PII]-uridylyl-L-tyrosine + diphosphate. It carries out the reaction [protein-PII]-uridylyl-L-tyrosine + H2O = [protein-PII]-L-tyrosine + UMP + H(+). Uridylyltransferase (UTase) activity is inhibited by glutamine, while glutamine activates uridylyl-removing (UR) activity. Modifies, by uridylylation and deuridylylation, the PII regulatory proteins (GlnB and homologs), in response to the nitrogen status of the cell that GlnD senses through the glutamine level. Under low glutamine levels, catalyzes the conversion of the PII proteins and UTP to PII-UMP and PPi, while under higher glutamine levels, GlnD hydrolyzes PII-UMP to PII and UMP (deuridylylation). Thus, controls uridylylation state and activity of the PII proteins, and plays an important role in the regulation of nitrogen assimilation and metabolism. In Neisseria meningitidis serogroup A / serotype 4A (strain DSM 15465 / Z2491), this protein is Bifunctional uridylyltransferase/uridylyl-removing enzyme.